A 97-amino-acid polypeptide reads, in one-letter code: uncharacterized protein (97 aa).

A disordered region spans residues 58 to 97; it reads SLLLPRTVQTGGTEREKPGPGQRKRGAHCSACKRSSTRPS.

This is an uncharacterized protein from Homo sapiens (Human).